We begin with the raw amino-acid sequence, 269 residues long: Formamidopyrimidine-DNA glycosylase (269 aa).

Catalysis depends on Pro-2, which acts as the Schiff-base intermediate with DNA. Glu-3 acts as the Proton donor in catalysis. Residue Lys-57 is the Proton donor; for beta-elimination activity of the active site. Residues His-90, Arg-109, and Lys-150 each contribute to the DNA site. The FPG-type zinc-finger motif lies at 235 to 269 (QVYGRKGEPCRVCGTPIVATKHAQRATFYCRHCQK). The active-site Proton donor; for delta-elimination activity is Arg-259.

It belongs to the FPG family. In terms of assembly, monomer. Zn(2+) is required as a cofactor.

The enzyme catalyses Hydrolysis of DNA containing ring-opened 7-methylguanine residues, releasing 2,6-diamino-4-hydroxy-5-(N-methyl)formamidopyrimidine.. The catalysed reaction is 2'-deoxyribonucleotide-(2'-deoxyribose 5'-phosphate)-2'-deoxyribonucleotide-DNA = a 3'-end 2'-deoxyribonucleotide-(2,3-dehydro-2,3-deoxyribose 5'-phosphate)-DNA + a 5'-end 5'-phospho-2'-deoxyribonucleoside-DNA + H(+). Its function is as follows. Involved in base excision repair of DNA damaged by oxidation or by mutagenic agents. Acts as a DNA glycosylase that recognizes and removes damaged bases. Has a preference for oxidized purines, such as 7,8-dihydro-8-oxoguanine (8-oxoG). Has AP (apurinic/apyrimidinic) lyase activity and introduces nicks in the DNA strand. Cleaves the DNA backbone by beta-delta elimination to generate a single-strand break at the site of the removed base with both 3'- and 5'-phosphates. This chain is Formamidopyrimidine-DNA glycosylase, found in Salmonella paratyphi C (strain RKS4594).